The sequence spans 316 residues: Thymidylate synthase (316 aa).

DUMP-binding positions include arginine 23 and 178–179 (RR). Cysteine 198 (nucleophile) is an active-site residue. Residues 218-221 (RSGD), asparagine 229, and 259-261 (HIY) each bind dUMP. A (6R)-5,10-methylene-5,6,7,8-tetrahydrofolate-binding site is contributed by aspartate 221. Residue alanine 315 participates in (6R)-5,10-methylene-5,6,7,8-tetrahydrofolate binding.

The protein belongs to the thymidylate synthase family. Bacterial-type ThyA subfamily. As to quaternary structure, homodimer.

It localises to the cytoplasm. It carries out the reaction dUMP + (6R)-5,10-methylene-5,6,7,8-tetrahydrofolate = 7,8-dihydrofolate + dTMP. The protein operates within pyrimidine metabolism; dTTP biosynthesis. Catalyzes the reductive methylation of 2'-deoxyuridine-5'-monophosphate (dUMP) to 2'-deoxythymidine-5'-monophosphate (dTMP) while utilizing 5,10-methylenetetrahydrofolate (mTHF) as the methyl donor and reductant in the reaction, yielding dihydrofolate (DHF) as a by-product. This enzymatic reaction provides an intracellular de novo source of dTMP, an essential precursor for DNA biosynthesis. This Latilactobacillus sakei subsp. sakei (strain 23K) (Lactobacillus sakei subsp. sakei) protein is Thymidylate synthase.